The chain runs to 101 residues: Salivary thrombin inhibitor anophelin (101 aa).

A signal peptide spans 1–21; that stretch reads MASKVIVIALLCIALAAFVQG. The tract at residues 26–101 is disordered; sequence THGEEPEYDE…SDSSSGSTEN (76 aa). The segment covering 31–40 has biased composition (acidic residues); that stretch reads PEYDEDDGAD. Residues 75–78 form a blocks active site cleft of host thrombin in a reverse direction compared to substrates region; sequence DPGR. Basic and acidic residues predominate over residues 75–87; that stretch reads DPGRRPEFLKQHN. The span at 88–101 shows a compositional bias: polar residues; sequence NENQSDSSSGSTEN. The N-linked (GlcNAc...) asparagine glycan is linked to Asn90.

This sequence belongs to the anophelin family. In terms of assembly, interacts with human F2 (thrombin); the interaction results in thrombin inhibition.

Its subcellular location is the secreted. In terms of biological role, salivary protein with anticoagulant activity that inhibits host thrombin (F2). The polypeptide is Salivary thrombin inhibitor anophelin (Anopheles stephensi (Indo-Pakistan malaria mosquito)).